Here is a 201-residue protein sequence, read N- to C-terminus: MSLSTLKNRRERGFFDGQFLIAMPGMEDRNFARTVIYICAHSDAGAMGFVINRPQSLTFTDVLLHLDMIKQEEPIVLPQRARDFPIQTGGPVESGRGFVLHSDDYASDSSIPVSDDICLTATLDIVRAISKGAGPKRATMLLGYSSWAAGQLENEVANNGWLTCPANEELIFDRNLDDKYERALAGMGINAAMLSAEAGHA.

Belongs to the UPF0301 (AlgH) family.

The sequence is that of UPF0301 protein RHE_CH00966 from Rhizobium etli (strain ATCC 51251 / DSM 11541 / JCM 21823 / NBRC 15573 / CFN 42).